A 131-amino-acid chain; its full sequence is Arsenate reductase 2 (131 aa).

Active-site nucleophile residues include Cys-10, Cys-82, and Cys-89. Cystine bridges form between Cys-10-Cys-82 and Cys-82-Cys-89.

Belongs to the low molecular weight phosphotyrosine protein phosphatase family. Thioredoxin-coupled ArsC subfamily.

It localises to the cytoplasm. It carries out the reaction arsenate + [thioredoxin]-dithiol + H(+) = arsenite + [thioredoxin]-disulfide + H2O. Its function is as follows. Catalyzes the reduction of arsenate [As(V)] to arsenite [As(III)]. The sequence is that of Arsenate reductase 2 from Staphylococcus epidermidis (strain ATCC 35984 / DSM 28319 / BCRC 17069 / CCUG 31568 / BM 3577 / RP62A).